Here is a 484-residue protein sequence, read N- to C-terminus: MLFKGVFAVFFVITLLYASLLIEVEGIGVNWGSQARHPLPPATVVRLLRENGIQKVKLFEADSAILKALSRTGIQVMVGIPNDLLAPLAGSVAAAERWVSQNVSAHVSSNGVDIRYVAVGNEPFLKAFNGTFEGITLPALQNIQSAIIKAGLATQVKVTVPLNADVYQSASNLPSDGDFRPEIRDLMLNIVKFLSDNGAPFTINIYPFISLYNDPNFPVEFAFFDGTGTPINDNGRIYDNVLDANYDTLVWSLQKNGFGNLTIIVGEVGWPTDGDKNANLMYARRYNQGFMNRQKANKGTPMRPGAMDAYLFGLIDEDAKSIQPGNFERHWGIFYIDGQPKYQLSLGSGNGLIPAKDVHYLAKKWCILAPNANLQDPQLGPSVSYACDHADCTSLGYGSSCGNLNLAQNVSYAFNSYYQVSNQLDSACKFPGLSIVSTRDPSVGSCKFKIMIKSEDASEASAMMPITRSTAVLLLLSICLYIVL.

The first 26 residues, 1–26, serve as a signal peptide directing secretion; the sequence is MLFKGVFAVFFVITLLYASLLIEVEG. Residue asparagine 102 is glycosylated (N-linked (GlcNAc...) asparagine). Glutamate 122 serves as the catalytic Proton donor. N-linked (GlcNAc...) asparagine glycosylation is found at asparagine 129 and asparagine 260. The active-site Nucleophile is glutamate 267. Residues cysteine 366 and cysteine 428 are joined by a disulfide bond. An N-linked (GlcNAc...) asparagine glycan is attached at asparagine 409. Residue alanine 460 is the site of GPI-anchor amidated alanine attachment. A propeptide spans 461–484 (removed in mature form); that stretch reads SAMMPITRSTAVLLLLSICLYIVL.

The protein belongs to the glycosyl hydrolase 17 family. Contains two additional disulfide bonds.

It is found in the cell membrane. The enzyme catalyses Hydrolysis of (1-&gt;3)-beta-D-glucosidic linkages in (1-&gt;3)-beta-D-glucans.. The polypeptide is Glucan endo-1,3-beta-glucosidase 5 (Arabidopsis thaliana (Mouse-ear cress)).